A 159-amino-acid chain; its full sequence is Ribosomal RNA large subunit methyltransferase H (159 aa).

S-adenosyl-L-methionine contacts are provided by residues L76, G108, and 127 to 132; that span reads FSKMTL.

Belongs to the RNA methyltransferase RlmH family. In terms of assembly, homodimer.

The protein localises to the cytoplasm. The catalysed reaction is pseudouridine(1915) in 23S rRNA + S-adenosyl-L-methionine = N(3)-methylpseudouridine(1915) in 23S rRNA + S-adenosyl-L-homocysteine + H(+). Specifically methylates the pseudouridine at position 1915 (m3Psi1915) in 23S rRNA. The chain is Ribosomal RNA large subunit methyltransferase H from Bacillus cereus (strain ATCC 10987 / NRS 248).